The chain runs to 58 residues: Large ribosomal subunit protein bL32 (58 aa).

The protein belongs to the bacterial ribosomal protein bL32 family.

The sequence is that of Large ribosomal subunit protein bL32 from Sulfurihydrogenibium sp. (strain YO3AOP1).